The primary structure comprises 216 residues: ATP-dependent Clp protease proteolytic subunit (216 aa).

The Nucleophile role is filled by Ser-120. The active site involves His-145.

The protein belongs to the peptidase S14 family. In terms of assembly, fourteen ClpP subunits assemble into 2 heptameric rings which stack back to back to give a disk-like structure with a central cavity, resembling the structure of eukaryotic proteasomes.

Its subcellular location is the cytoplasm. The enzyme catalyses Hydrolysis of proteins to small peptides in the presence of ATP and magnesium. alpha-casein is the usual test substrate. In the absence of ATP, only oligopeptides shorter than five residues are hydrolyzed (such as succinyl-Leu-Tyr-|-NHMec, and Leu-Tyr-Leu-|-Tyr-Trp, in which cleavage of the -Tyr-|-Leu- and -Tyr-|-Trp bonds also occurs).. Cleaves peptides in various proteins in a process that requires ATP hydrolysis. Has a chymotrypsin-like activity. Plays a major role in the degradation of misfolded proteins. The protein is ATP-dependent Clp protease proteolytic subunit of Cupriavidus metallidurans (strain ATCC 43123 / DSM 2839 / NBRC 102507 / CH34) (Ralstonia metallidurans).